The chain runs to 321 residues: Lipoyl synthase (321 aa).

[4Fe-4S] cluster is bound by residues cysteine 68, cysteine 73, cysteine 79, cysteine 94, cysteine 98, cysteine 101, and serine 308. One can recognise a Radical SAM core domain in the interval 80–297 (FNHGTATFMI…KVIALELGFT (218 aa)).

It belongs to the radical SAM superfamily. Lipoyl synthase family. Requires [4Fe-4S] cluster as cofactor.

Its subcellular location is the cytoplasm. The catalysed reaction is [[Fe-S] cluster scaffold protein carrying a second [4Fe-4S](2+) cluster] + N(6)-octanoyl-L-lysyl-[protein] + 2 oxidized [2Fe-2S]-[ferredoxin] + 2 S-adenosyl-L-methionine + 4 H(+) = [[Fe-S] cluster scaffold protein] + N(6)-[(R)-dihydrolipoyl]-L-lysyl-[protein] + 4 Fe(3+) + 2 hydrogen sulfide + 2 5'-deoxyadenosine + 2 L-methionine + 2 reduced [2Fe-2S]-[ferredoxin]. Its pathway is protein modification; protein lipoylation via endogenous pathway; protein N(6)-(lipoyl)lysine from octanoyl-[acyl-carrier-protein]: step 2/2. Functionally, catalyzes the radical-mediated insertion of two sulfur atoms into the C-6 and C-8 positions of the octanoyl moiety bound to the lipoyl domains of lipoate-dependent enzymes, thereby converting the octanoylated domains into lipoylated derivatives. This Aliivibrio salmonicida (strain LFI1238) (Vibrio salmonicida (strain LFI1238)) protein is Lipoyl synthase.